The sequence spans 308 residues: Acetaldehyde dehydrogenase 2 (308 aa).

NAD(+) is bound at residue 12 to 15; the sequence is SGNI. Cys-127 (acyl-thioester intermediate) is an active-site residue. NAD(+) contacts are provided by residues 162–170 and Asn-281; that span reads SAGPGTRAN.

The protein belongs to the acetaldehyde dehydrogenase family.

It carries out the reaction acetaldehyde + NAD(+) + CoA = acetyl-CoA + NADH + H(+). The sequence is that of Acetaldehyde dehydrogenase 2 from Mycobacterium marinum (strain ATCC BAA-535 / M).